The chain runs to 127 residues: Large ribosomal subunit protein bL12 (127 aa).

It belongs to the bacterial ribosomal protein bL12 family. As to quaternary structure, homodimer. Part of the ribosomal stalk of the 50S ribosomal subunit. Forms a multimeric L10(L12)X complex, where L10 forms an elongated spine to which 2 to 4 L12 dimers bind in a sequential fashion. Binds GTP-bound translation factors.

Forms part of the ribosomal stalk which helps the ribosome interact with GTP-bound translation factors. Is thus essential for accurate translation. This is Large ribosomal subunit protein bL12 from Streptomyces avermitilis (strain ATCC 31267 / DSM 46492 / JCM 5070 / NBRC 14893 / NCIMB 12804 / NRRL 8165 / MA-4680).